The chain runs to 296 residues: 4-hydroxy-tetrahydrodipicolinate synthase (296 aa).

Pyruvate is bound at residue threonine 49. The active-site Proton donor/acceptor is tyrosine 137. Lysine 165 acts as the Schiff-base intermediate with substrate in catalysis. Isoleucine 207 contacts pyruvate.

The protein belongs to the DapA family. As to quaternary structure, homotetramer; dimer of dimers.

The protein localises to the cytoplasm. It catalyses the reaction L-aspartate 4-semialdehyde + pyruvate = (2S,4S)-4-hydroxy-2,3,4,5-tetrahydrodipicolinate + H2O + H(+). Its pathway is amino-acid biosynthesis; L-lysine biosynthesis via DAP pathway; (S)-tetrahydrodipicolinate from L-aspartate: step 3/4. In terms of biological role, catalyzes the condensation of (S)-aspartate-beta-semialdehyde [(S)-ASA] and pyruvate to 4-hydroxy-tetrahydrodipicolinate (HTPA). The sequence is that of 4-hydroxy-tetrahydrodipicolinate synthase from Afipia carboxidovorans (strain ATCC 49405 / DSM 1227 / KCTC 32145 / OM5) (Oligotropha carboxidovorans).